The following is a 283-amino-acid chain: Bis(5'-nucleosyl)-tetraphosphatase, symmetrical (283 aa).

It belongs to the Ap4A hydrolase family.

The catalysed reaction is P(1),P(4)-bis(5'-adenosyl) tetraphosphate + H2O = 2 ADP + 2 H(+). Its function is as follows. Hydrolyzes diadenosine 5',5'''-P1,P4-tetraphosphate to yield ADP. This chain is Bis(5'-nucleosyl)-tetraphosphatase, symmetrical, found in Pseudomonas aeruginosa (strain LESB58).